Consider the following 681-residue polypeptide: Chaperone protein htpG (681 aa).

The segment at 1 to 326 is a; substrate-binding; sequence MQKGNIGVTT…SPDIPLNVSR (326 aa). Residues 327 to 545 are b; it reads SYLQSDSNVK…YMRRMKEMAN (219 aa). The segment at 546–681 is c; it reads IQAGMSFYGE…NFVKRSIELI (136 aa).

The protein belongs to the heat shock protein 90 family. Homodimer.

The protein resides in the cytoplasm. Molecular chaperone. Has ATPase activity. This is Chaperone protein htpG from Bacteroides fragilis (strain YCH46).